Consider the following 425-residue polypeptide: Serine--tRNA ligase (425 aa).

230 to 232 (TAE) serves as a coordination point for L-serine. 261 to 263 (RSE) contacts ATP. E284 is an L-serine binding site. 348-351 (EISS) serves as a coordination point for ATP. Position 384 (S384) interacts with L-serine.

Belongs to the class-II aminoacyl-tRNA synthetase family. Type-1 seryl-tRNA synthetase subfamily. In terms of assembly, homodimer. The tRNA molecule binds across the dimer.

The protein localises to the cytoplasm. It carries out the reaction tRNA(Ser) + L-serine + ATP = L-seryl-tRNA(Ser) + AMP + diphosphate + H(+). The enzyme catalyses tRNA(Sec) + L-serine + ATP = L-seryl-tRNA(Sec) + AMP + diphosphate + H(+). It functions in the pathway aminoacyl-tRNA biosynthesis; selenocysteinyl-tRNA(Sec) biosynthesis; L-seryl-tRNA(Sec) from L-serine and tRNA(Sec): step 1/1. Functionally, catalyzes the attachment of serine to tRNA(Ser). Is also able to aminoacylate tRNA(Sec) with serine, to form the misacylated tRNA L-seryl-tRNA(Sec), which will be further converted into selenocysteinyl-tRNA(Sec). The sequence is that of Serine--tRNA ligase from Streptococcus pyogenes serotype M12 (strain MGAS2096).